Consider the following 128-residue polypeptide: 14.7 kDa protein (128 aa).

The C4-type zinc-finger motif lies at 65–94 (CFDCGAYLYDDHVCKRFTSRSNSDCLSVIH).

Functionally, may act as a regulatory factor during viral transcription. The protein is 14.7 kDa protein of Shallot virus X (ShVX).